Consider the following 178-residue polypeptide: Acireductone dioxygenase 1 (178 aa).

Histidine 84, histidine 86, glutamate 90, and histidine 130 together coordinate Fe(2+). The Ni(2+) site is built by histidine 84, histidine 86, glutamate 90, and histidine 130.

The protein belongs to the acireductone dioxygenase (ARD) family. Fe(2+) is required as a cofactor. Requires Ni(2+) as cofactor.

It localises to the cytoplasm. Its subcellular location is the nucleus. The enzyme catalyses 1,2-dihydroxy-5-(methylsulfanyl)pent-1-en-3-one + O2 = 4-methylsulfanyl-2-oxobutanoate + formate + 2 H(+). The catalysed reaction is 1,2-dihydroxy-5-(methylsulfanyl)pent-1-en-3-one + O2 = 3-(methylsulfanyl)propanoate + CO + formate + 2 H(+). It functions in the pathway amino-acid biosynthesis; L-methionine biosynthesis via salvage pathway; L-methionine from S-methyl-5-thio-alpha-D-ribose 1-phosphate: step 5/6. In terms of biological role, catalyzes 2 different reactions between oxygen and the acireductone 1,2-dihydroxy-3-keto-5-methylthiopentene (DHK-MTPene) depending upon the metal bound in the active site. Fe-containing acireductone dioxygenase (Fe-ARD) produces formate and 2-keto-4-methylthiobutyrate (KMTB), the alpha-ketoacid precursor of methionine in the methionine recycle pathway. Ni-containing acireductone dioxygenase (Ni-ARD) produces methylthiopropionate, carbon monoxide and formate, and does not lie on the methionine recycle pathway. The sequence is that of Acireductone dioxygenase 1 from Coprinopsis cinerea (strain Okayama-7 / 130 / ATCC MYA-4618 / FGSC 9003) (Inky cap fungus).